The sequence spans 645 residues: Cyclin-D-binding Myb-like transcription factor 1 (645 aa).

2 disordered regions span residues 34–71 (QNDGEDLGSDETTEPVHKRIRLSSEDGEDPQDSASTEY) and 95–119 (RDEELESDDLSETTGKDSSAQKKGE). 2 stretches are compositionally biased toward acidic residues: residues 36–46 (DGEDLGSDETT) and 95–105 (RDEELESDDLS). The Myb-like 1 domain maps to 219–257 (GKYTDEEINKLKELRQKHGNDWATIGSALGRSASSVKDR). The HTH myb-type domain occupies 262–327 (KDTCNTGKWT…KWLNYLNWKQ (66 aa)). The segment at residues 300 to 323 (WASVAELVGTRSEKQCRSKWLNYL) is a DNA-binding region (H-T-H motif). The region spanning 333–382 (WTKEDDINLVRRIAELEVEDENEINWDILASGWSSVRSPQWLRSKWWTIK) is the Myb-like 2 domain. The interval 568–645 (VKEEPSENQT…ILENQEEGSN (78 aa)) is disordered. Over residues 587–597 (EQSKQGEKTLD) the composition is skewed to basic and acidic residues. Positions 615–625 (IPTNEDISSDS) are enriched in polar residues.

Belongs to the DMTF1 family.

The protein resides in the nucleus. Its function is as follows. Transcriptional activator which activates the CDKN2A/ARF locus in response to Ras-Raf signaling, thereby promoting p53/TP53-dependent growth arrest. Binds to the consensus sequence 5'-CCCG[GT]ATGT-3'. The chain is Cyclin-D-binding Myb-like transcription factor 1 (dmtf1) from Danio rerio (Zebrafish).